We begin with the raw amino-acid sequence, 257 residues long: Acetylglutamate kinase (257 aa).

Residues 43-44, R65, and N157 each bind substrate; that span reads GG. ATP-binding positions include 180 to 185 and 208 to 210; these read DVSGIL and IIT.

Belongs to the acetylglutamate kinase family. ArgB subfamily. As to quaternary structure, homodimer.

It is found in the cytoplasm. It carries out the reaction N-acetyl-L-glutamate + ATP = N-acetyl-L-glutamyl 5-phosphate + ADP. Its pathway is amino-acid biosynthesis; L-arginine biosynthesis; N(2)-acetyl-L-ornithine from L-glutamate: step 2/4. Catalyzes the ATP-dependent phosphorylation of N-acetyl-L-glutamate. In Proteus mirabilis (strain HI4320), this protein is Acetylglutamate kinase.